A 25-amino-acid chain; its full sequence is Small ribosomal subunit protein eS32 (25 aa).

The segment at 1 to 25 is disordered; the sequence is MRDKWRKKRVRRLKRKRRKVRARSK.

This sequence belongs to the eukaryotic ribosomal protein eS32 family. Component of the small ribosomal subunit. Mature ribosomes consist of a small (40S) and a large (60S) subunit. The 40S subunit contains about 32 different proteins and 1 molecule of RNA (18S). The 60S subunit contains 45 different proteins and 3 molecules of RNA (25S, 5.8S and 5S).

It localises to the cytoplasm. Its function is as follows. Component of the ribosome, a large ribonucleoprotein complex responsible for the synthesis of proteins in the cell. The small ribosomal subunit (SSU) binds messenger RNAs (mRNAs) and translates the encoded message by selecting cognate aminoacyl-transfer RNA (tRNA) molecules. The large subunit (LSU) contains the ribosomal catalytic site termed the peptidyl transferase center (PTC), which catalyzes the formation of peptide bonds, thereby polymerizing the amino acids delivered by tRNAs into a polypeptide chain. The nascent polypeptides leave the ribosome through a tunnel in the LSU and interact with protein factors that function in enzymatic processing, targeting, and the membrane insertion of nascent chains at the exit of the ribosomal tunnel. The sequence is that of Small ribosomal subunit protein eS32 from Candida albicans (strain SC5314 / ATCC MYA-2876) (Yeast).